The following is a 379-amino-acid chain: Chaperone protein DnaJ (379 aa).

The J domain occupies 5–69; the sequence is EFYDRLGVSK…QKRAAYDQYG (65 aa). The CR-type zinc-finger motif lies at 135 to 217; it reads GAEKEVSYNR…CHGTGHEKKT (83 aa). The Zn(2+) site is built by Cys148, Cys151, Cys165, Cys168, Cys191, Cys194, Cys205, and Cys208. CXXCXGXG motif repeat units follow at residues 148–155, 165–172, 191–198, and 205–212; these read CHTCSGSG, CQKCHGSG, CDVCQGSG, and CPTCHGTG.

The protein belongs to the DnaJ family. Homodimer. The cofactor is Zn(2+).

It is found in the cytoplasm. In terms of biological role, participates actively in the response to hyperosmotic and heat shock by preventing the aggregation of stress-denatured proteins and by disaggregating proteins, also in an autonomous, DnaK-independent fashion. Unfolded proteins bind initially to DnaJ; upon interaction with the DnaJ-bound protein, DnaK hydrolyzes its bound ATP, resulting in the formation of a stable complex. GrpE releases ADP from DnaK; ATP binding to DnaK triggers the release of the substrate protein, thus completing the reaction cycle. Several rounds of ATP-dependent interactions between DnaJ, DnaK and GrpE are required for fully efficient folding. Also involved, together with DnaK and GrpE, in the DNA replication of plasmids through activation of initiation proteins. This chain is Chaperone protein DnaJ, found in Streptococcus agalactiae serotype III (strain NEM316).